Reading from the N-terminus, the 505-residue chain is Lysine--tRNA ligase (505 aa).

E415 and E422 together coordinate Mg(2+).

It belongs to the class-II aminoacyl-tRNA synthetase family. In terms of assembly, homodimer. Requires Mg(2+) as cofactor.

It localises to the cytoplasm. The catalysed reaction is tRNA(Lys) + L-lysine + ATP = L-lysyl-tRNA(Lys) + AMP + diphosphate. This chain is Lysine--tRNA ligase, found in Serratia proteamaculans (strain 568).